The chain runs to 447 residues: UDP-N-acetylmuramate--L-alanine ligase (447 aa).

108–114 is an ATP binding site; it reads GSHGKTS.

Belongs to the MurCDEF family.

Its subcellular location is the cytoplasm. The enzyme catalyses UDP-N-acetyl-alpha-D-muramate + L-alanine + ATP = UDP-N-acetyl-alpha-D-muramoyl-L-alanine + ADP + phosphate + H(+). It functions in the pathway cell wall biogenesis; peptidoglycan biosynthesis. In terms of biological role, cell wall formation. The chain is UDP-N-acetylmuramate--L-alanine ligase from Listeria monocytogenes serotype 4a (strain HCC23).